We begin with the raw amino-acid sequence, 1387 residues long: MSSLVSTPFTTATGVQKKLGAPVPLHSFLLSRRQPAAGAGRGRAAAAAIRCAVAGNGLFTQTKPEVRRVVPPEGDASRRGVPRVKVVYVVLEAQYQSSVTAAVRELNADPRRAAGFEVVGYLVEELRDEETYKTFCADLADANVFIGSLIFVEELALKVKDAVEKERDRMDAVLVFPSMPEVMRLNKLGSFSMSQLGQSKSPFFQLFKRKKNSGGFADSMLKLVRTLPKVLKYLPSDKAQDARLYILSLQFWLGGSPDNLQNFLKMIAVSYVPALKGADIKYDDPVLFLDAGIWHPLAPTMYDDVKEYLNWYGTRRDTNDKLKDPNAPVIGLVLQRSHIVTGDDGHYVAVIMELEAKGAKVIPIFAGGLDFSGPTQRYLVDPITGKPFVNAVVSLTGFALVGGPARQDHPKAIAALQKLDVPYIVALPLVFQTTEEWLNSTLGLHPIQVALQVALPELDGGMEPIVFAGRDPRTGKSHALHKRVEQLCTRAIRWAELKRKTKEEKKLAITVFSFPPDKGNVGTAAYLNVFNSIYSVLQDLKKDGYNVEGLPDTAEALIEEVIHDKEAQFNSPNLNVAYRMNVREYQSLTSYASLLEENWGKPPGNLNSDGENLLVYGKQYGNVFIGVQPTFGYEGDPMRLLFSKSASPHHGFAAYYTFVEKIFQADAVLHFGTHGSLEFMPGKQVGMSDACYPDSLIGNIPNIYYYAANNPSEATVAKRRSYANTISYLTPPAENAGLYKGLKQLSELISSYQSLKDTGRGPQIVSSIISTAKQCNLDKDVPLPEEGVELPPNERDLIVGKVYAKIMEIESRLLPCGLHVIGEPPSAIEAVATLVNIASLDRPEDEIYSLPNILAQTVGRNIEDVYRGSDKGILADVELLRQITEASRGAITTFVERTTNNKGQVVDVTNKLSTMLGFGLSEPWVQHLSKTKFIRADREKLRTLFTFLGECLKLIVADNELGSLKLALEGSYVEPGPGGDPIRNPKVLPTGKNIHALDPQAIPTTAALKSAKIIVDRLLERQKVDNGGKYPETIALVLWGTDNIKTYGESLAQVLWMIGVRPVADTFGRVNRVEPVSLEELGRPRIDVVINCSGVFRDLFINQMNLLDRAVKMVAELDEPEEMNYVRKHAQEQARELGVSLREAATRVFSNASGSYSSNVNLAVENASWTDEKQLQDMYLSRKSFAFDCDAPGAGMREQRKTFELALATADATFQNLDSSEISLTDVSHYFDSDPTKLVQGLRKDGRAPSSYIADTTTANAQVRTLSETVRLDARTKLLNPKWYEGMMKSGYEGVREIEKRLTNTVGWSATSGQVDNWVYEEANATFIEDEAMRKRLMDTNPNSFRKLVQTFLEASGRGYWETSEENLEKLRELYSEVEDKIEGIDR.

A chloroplast-targeting transit peptide spans 1–50 (MSSLVSTPFTTATGVQKKLGAPVPLHSFLLSRRQPAAGAGRGRAAAAAIR).

This sequence belongs to the Mg-chelatase subunit H family. As to quaternary structure, the magnesium chelatase complex is a heterotrimer consisting of subunits CHLI, CHLD and CHLH.

It is found in the plastid. The protein localises to the chloroplast stroma. Its subcellular location is the chloroplast membrane. It catalyses the reaction protoporphyrin IX + Mg(2+) + ATP + H2O = Mg-protoporphyrin IX + ADP + phosphate + 3 H(+). It participates in porphyrin-containing compound metabolism; chlorophyll biosynthesis. In terms of biological role, involved in chlorophyll biosynthesis. Catalyzes the insertion of magnesium ion into protoporphyrin IX to yield Mg-protoporphyrin IX. The reaction takes place in two steps, with an ATP-dependent activation followed by an ATP-dependent chelation step. May be involved in the plastid-to-nucleus retrograde signaling. This chain is Magnesium-chelatase subunit ChlH, chloroplastic (CHLH), found in Oryza sativa subsp. japonica (Rice).